Here is a 409-residue protein sequence, read N- to C-terminus: 23S rRNA (uracil(747)-C(5))-methyltransferase (409 aa).

Residues Cys61, Cys67, Cys70, and Cys137 each coordinate [4Fe-4S] cluster. S-adenosyl-L-methionine-binding residues include Gln251, Tyr277, Glu298, and Asp339. Cys365 (nucleophile) is an active-site residue.

It belongs to the class I-like SAM-binding methyltransferase superfamily. RNA M5U methyltransferase family.

The catalysed reaction is uridine(747) in 23S rRNA + S-adenosyl-L-methionine = 5-methyluridine(747) in 23S rRNA + S-adenosyl-L-homocysteine + H(+). In terms of biological role, catalyzes the formation of 5-methyl-uridine at position equivalent to 747 (m5U747) in 23S rRNA. The protein is 23S rRNA (uracil(747)-C(5))-methyltransferase of Pyrococcus furiosus (strain ATCC 43587 / DSM 3638 / JCM 8422 / Vc1).